Consider the following 288-residue polypeptide: HTH-type transcriptional regulator CzcR (288 aa).

The HTH lysR-type domain occupies 1–58 (MELRDLQIFQSVADQGSVSSAAKELNYVQSNVTARIKQLENELKTPLFYRHKRGMTLT). The H-T-H motif DNA-binding region spans 18–37 (VSSAAKELNYVQSNVTARIK).

This sequence belongs to the LysR transcriptional regulatory family.

The protein is HTH-type transcriptional regulator CzcR (czcR) of Bacillus cereus (strain ATCC 10987 / NRS 248).